Reading from the N-terminus, the 105-residue chain is Ketoisovalerate oxidoreductase subunit VorD (105 aa).

4Fe-4S ferredoxin-type domains are found at residues 44-73 and 74-103; these read FMPV…IKED and GFVA…MVRE. [4Fe-4S] cluster contacts are provided by Cys-53, Cys-56, Cys-59, Cys-63, Cys-83, Cys-86, Cys-89, and Cys-93.

As to quaternary structure, heterotetramer of one alpha, one beta, one delta and one gamma chain. Requires [4Fe-4S] cluster as cofactor.

It carries out the reaction 3-methyl-2-oxobutanoate + 2 oxidized [2Fe-2S]-[ferredoxin] + CoA = 2-methylpropanoyl-CoA + 2 reduced [2Fe-2S]-[ferredoxin] + CO2 + H(+). This Pyrococcus horikoshii (strain ATCC 700860 / DSM 12428 / JCM 9974 / NBRC 100139 / OT-3) protein is Ketoisovalerate oxidoreductase subunit VorD (vorD).